A 453-amino-acid chain; its full sequence is MDLLKLNRSLQGPGPGSGSSLCRPGVSLLNSSSAGNLSCETPRIRGTGTRELELTIRITLYAVIFLMSVGGNVLIIVVLGLSRRLRTVTNAFLLSLAVSDLLLAVACMPFTLLPNLMGTFIFGTVICKAVSYLMGVSVSVSTLNLAAIALERYSAICRPLQARVWQTRSHAARVILATWLLSGLLMVPYPVYTVVQPVGPRILQCMHLWPSERVQQMWSVLLLILLFFIPGVVMAVAYGLISRELYLGLRFDGDNDSETQSRVRNQGGLPGGAAAPGPVHQNGGCRHVTSLTGEDSDGCYVQLPRSRLEMTTLTTPTTGPGPGPRPNQAKLLAKKRVVRMLLVIVLLFFVCWLPVYSANTWRAFDGPGARRALAGAPISFIHLLSYTSACANPLVYCFMHRRFRQACLDTCARCCPRPPRARPRPLPDEDPPTPSIASLSRLSYTTISTLGPG.

Residues 1-57 (MDLLKLNRSLQGPGPGSGSSLCRPGVSLLNSSSAGNLSCETPRIRGTGTRELELTIR) lie on the Extracellular side of the membrane. N-linked (GlcNAc...) asparagine glycosylation is found at Asn7, Asn30, and Asn36. The helical transmembrane segment at 58 to 79 (ITLYAVIFLMSVGGNVLIIVVL) threads the bilayer. Residues 80–87 (GLSRRLRT) are Cytoplasmic-facing. Residues 88–109 (VTNAFLLSLAVSDLLLAVACMP) traverse the membrane as a helical segment. Topologically, residues 110-131 (FTLLPNLMGTFIFGTVICKAVS) are extracellular. Residues Cys127 and Cys205 are joined by a disulfide bond. A helical transmembrane segment spans residues 132–150 (YLMGVSVSVSTLNLAAIAL). At 151-170 (ERYSAICRPLQARVWQTRSH) the chain is on the cytoplasmic side. The helical transmembrane segment at 171-189 (AARVILATWLLSGLLMVPY) threads the bilayer. Residues 190–219 (PVYTVVQPVGPRILQCMHLWPSERVQQMWS) are Extracellular-facing. Residues 220 to 242 (VLLLILLFFIPGVVMAVAYGLIS) form a helical membrane-spanning segment. Topologically, residues 243-339 (RELYLGLRFD…KLLAKKRVVR (97 aa)) are cytoplasmic. The tract at residues 257–276 (SETQSRVRNQGGLPGGAAAP) is disordered. A helical membrane pass occupies residues 340–361 (MLLVIVLLFFVCWLPVYSANTW). The Extracellular portion of the chain corresponds to 362-379 (RAFDGPGARRALAGAPIS). Residues 380–400 (FIHLLSYTSACANPLVYCFMH) traverse the membrane as a helical segment. The Cytoplasmic portion of the chain corresponds to 401-453 (RRFRQACLDTCARCCPRPPRARPRPLPDEDPPTPSIASLSRLSYTTISTLGPG). Cys414 carries the S-palmitoyl cysteine lipid modification.

The protein belongs to the G-protein coupled receptor 1 family.

The protein resides in the cell membrane. Receptor for gastrin and cholecystokinin. The CCK-B receptors occur throughout the central nervous system where they modulate anxiety, analgesia, arousal, and neuroleptic activity. This receptor mediates its action by association with G proteins that activate a phosphatidylinositol-calcium second messenger system. The sequence is that of Gastrin/cholecystokinin type B receptor (Cckbr) from Mus musculus (Mouse).